Reading from the N-terminus, the 220-residue chain is Glutamine amidotransferase-like class 1 domain-containing protein 1 (220 aa).

The N-terminal stretch at 1–38 is a signal peptide; sequence MASERLPNRPACLLVASGAAEGVSAQSFLHCFTMASTA. Asn-201 is a glycosylation site (N-linked (GlcNAc...) asparagine).

This sequence belongs to the peptidase C56 family. As to quaternary structure, homotetramer. Component of the FERRY complex composed of five subunits, TBCK, PPP1R21, FERRY3, CRYZL1 and GATD1 with a ratio of 1:2:1:2:4, respectively.

Its subcellular location is the secreted. The protein localises to the early endosome. In terms of biological role, component of the FERRY complex (Five-subunit Endosomal Rab5 and RNA/ribosome intermediary). The FERRY complex directly interacts with mRNAs and RAB5A, and functions as a RAB5A effector involved in the localization and the distribution of specific mRNAs most likely by mediating their endosomal transport. The complex recruits mRNAs and ribosomes to early endosomes through direct mRNA-interaction. The polypeptide is Glutamine amidotransferase-like class 1 domain-containing protein 1 (Homo sapiens (Human)).